A 205-amino-acid chain; its full sequence is Recombination protein RecR (205 aa).

The C4-type zinc-finger motif lies at 64-79 (CSRCYFITQNDLCAIC). The Toprim domain occupies 87–182 (RIVCVVEEPL…RVTRLARGLP (96 aa)).

Belongs to the RecR family.

In terms of biological role, may play a role in DNA repair. It seems to be involved in an RecBC-independent recombinational process of DNA repair. It may act with RecF and RecO. The sequence is that of Recombination protein RecR from Roseiflexus castenholzii (strain DSM 13941 / HLO8).